The following is a 163-amino-acid chain: Anthranilate 1,2-dioxygenase small subunit (163 aa).

This sequence belongs to the bacterial ring-hydroxylating dioxygenase beta subunit family. As to quaternary structure, the anthranilate dioxygenase (AntDO) multicomponent enzyme system is composed of an oxygenase component and a NADH:acceptor reductase component (AntC). The oxygenase component is a heterohexamer of 3 large (AntA) and 3 small (AntB) subunits.

The catalysed reaction is anthranilate + NADH + O2 + 3 H(+) = catechol + NH4(+) + CO2 + NAD(+). It catalyses the reaction anthranilate + NADPH + O2 + 3 H(+) = catechol + NH4(+) + CO2 + NADP(+). The protein operates within aromatic compound metabolism; anthranilate degradation via hydroxylation; catechol from anthranilate: step 1/1. Component of anthranilate dioxygenase multicomponent enzyme system which catalyzes the incorporation of both atoms of molecular oxygen into anthranilate to form catechol. The sequence is that of Anthranilate 1,2-dioxygenase small subunit from Acinetobacter baylyi (strain ATCC 33305 / BD413 / ADP1).